A 491-amino-acid chain; its full sequence is 3-epi-6-deoxocathasterone 23-monooxygenase CYP90D1 (491 aa).

The chain crosses the membrane as a helical span at residues leucine 7–leucine 27. Residue cysteine 442 coordinates heme.

This sequence belongs to the cytochrome P450 family. Heme is required as a cofactor. In terms of tissue distribution, expressed in leaf vascular tissue.

It is found in the endoplasmic reticulum membrane. It carries out the reaction 3-epi-6-deoxocathasterone + reduced [NADPH--hemoprotein reductase] + O2 = 6-deoxotyphasterol + oxidized [NADPH--hemoprotein reductase] + H2O + H(+). It catalyses the reaction (22S,24R)-22-hydroxy-5alpha-ergostan-3-one + reduced [NADPH--hemoprotein reductase] + O2 = 3-dehydro-6-deoxoteasterone + oxidized [NADPH--hemoprotein reductase] + H2O + H(+). The protein operates within plant hormone biosynthesis; brassinosteroid biosynthesis. Functionally, involved in brassinosteroid (BR) biosynthesis. May convert teasterone (TE) to 3-dehydroteasterone (3DT, 3-DHT), or 6-deoxoteasterone (6-deoxoTE) to 3-dehydro-6-deoxoteasterone (6-deoxo3DT, 6-deoxo3DHT). C-23 hydroxylase that converts directly (22S,24R)-22-hydroxy-5-alpha-ergostan-3-one and 3-epi-6-deoxocathasterone to 3-dehydro-6-deoxoteasterone (6-deoxo3DT, 6-deoxo3DHT) and 6-deoxotyphasterol (6-deoxoTY), respectively. These C-23 hydroxylation shortcuts bypass campestanol, 6-deoxocathasterone, and 6-deoxoteasterone (6-deoxoTE). Also catalyzes the conversion of cathasterone to teasterone (TE), 6-deoxotyphasterol (6-deoxoTY) to 6-deoxocathasterone (6-deoxoCT), (22S,24R)-22-hydroxyergost-4-en-3-one (22-OH-4-en-3-one) to (22R,23R)-22,23-dihydroxy-campest-4-en-3-one (22,23-diOH-4-en-3-one) and (22S)-22-hydroxycampesterol (22-OHCR) to (22R,23R)-22,23-dihydroxycampesterol (22,23-diOHCR). The sequence is that of 3-epi-6-deoxocathasterone 23-monooxygenase CYP90D1 from Arabidopsis thaliana (Mouse-ear cress).